The sequence spans 230 residues: MNDGDVSRQIQQMVRFIRQEAEEKANEISVSAEEEFNIEKLQLVEAEKKKIRQDYEKKEKQADVRKKIDYSMQLNASRIKVLQAQDDIVNAMKDQAAKDLLNVSRDEYAYKQLLKDLIVQCLLRLKEPSVLLRCREEDLGLVEAVLDDAKEEYAGKAKVHAPEVAVDTKIFLPPPPKSNDPHGLHCSGGVVLASRDGKIVCENTLDARLDVAFRMKLPVIRKSLFGQVTA.

Met-1 carries the post-translational modification N-acetylmethionine. Residues Arg-8 to Lys-67 adopt a coiled-coil conformation. Ser-178 bears the Phosphoserine mark.

This sequence belongs to the V-ATPase E subunit family. As to quaternary structure, V-ATPase is a heteromultimeric enzyme composed of a peripheral catalytic V1 complex (components A to H) attached to an integral membrane V0 proton pore complex (components: a, c, c'', d and e).

Its subcellular location is the vacuole membrane. Its function is as follows. Subunit of the peripheral V1 complex of vacuolar ATPase essential for assembly or catalytic function. V-ATPase is responsible for acidifying a variety of intracellular compartments in eukaryotic cells. Required for Golgi organization and vacuole function in embryogenesis. The chain is V-type proton ATPase subunit E1 (VHA-E1) from Arabidopsis thaliana (Mouse-ear cress).